A 563-amino-acid chain; its full sequence is Probable CoA ligase CCL11 (563 aa).

Residues 195–203 (TSGTTSSPK), 328–333 (HGYGMT), Asp426, 438–441 (IKDR), and Lys534 each bind ATP. Residues 263-328 (DGEIIFNLIR…TESLGFVISH (66 aa)) form an SBD1 region. Residues 329–405 (GYGMTEMLGV…LKGSSIMLGY (77 aa)) form an SBD2 region.

It belongs to the ATP-dependent AMP-binding enzyme family.

The protein resides in the cytoplasm. Its subcellular location is the cytosol. The sequence is that of Probable CoA ligase CCL11 from Humulus lupulus (European hop).